A 713-amino-acid chain; its full sequence is Nucleolin (713 aa).

The tract at residues 1-309 (MVKLAKAGKT…QKIEGSEPTT (309 aa)) is disordered. N6-acetyllysine is present on residues lysine 9, lysine 15, and lysine 16. Acidic residues predominate over residues 24 to 46 (VEEDSEDEEMSEDEDDSSGEEEV). Residues serine 28, serine 34, serine 40, and serine 41 each carry the phosphoserine modification. Low complexity predominate over residues 56–111 (ATTTPAKKVVVSQTKKAAVPTPAKKAAVTPGKKAAATPAKKAVTPAKVVPTPGKKG). Repeat 1 spans residues 58 to 65 (TTPAKKVV). Residues 58 to 135 (TTPAKKVVVS…GAVTPAKGAK (78 aa)) form an 8 X 8 AA tandem repeats of X-T-P-X-K-K-X-X region. Position 67 is a phosphoserine (serine 67). Phosphothreonine is present on residues threonine 69, threonine 76, threonine 84, and threonine 92. Tandem repeats lie at residues 75 to 82 (PTPAKKAA), 83 to 90 (VTPGKKAA), and 91 to 98 (ATPAKKAV). The residue at position 96 (lysine 96) is an N6-acetyllysine. Position 99 is a phosphothreonine (threonine 99). Residues 99 to 104 (TPAKVV) form a 5; truncated repeat. N6-acetyllysine is present on lysine 102. The stretch at 105–112 (PTPGKKGA) is repeat 6. Threonine 106 is subject to Phosphothreonine. 2 positions are modified to N6-acetyllysine: lysine 109 and lysine 116. 2 consecutive repeat copies span residues 120–127 (PTPGKKGA) and 128–135 (VTPAKGAK). Threonine 121 is modified (phosphothreonine). N6-acetyllysine is present on lysine 124. Phosphoserine is present on residues serine 145 and serine 157. The span at 145-168 (SDEDEDEEDEDDSDEDEDEEDEFE) shows a compositional bias: acidic residues. The span at 169–186 (PPVVKGVKPAKAAPAAPA) shows a compositional bias: low complexity. Phosphoserine is present on residues serine 187 and serine 213. Positions 187–218 (SEDEDEEDDDDEDDDDDDEEEEEEDDSEEEVM) are enriched in acidic residues. Phosphothreonine is present on threonine 221. The segment covering 242–275 (EEEEDDEDDEDEEEDEDEEDEEDDEDEDEEEEEE) has biased composition (acidic residues). The span at 288 to 304 (MTKQKEAPEAKKQKIEG) shows a compositional bias: basic and acidic residues. Lysine 301 is covalently cross-linked (Glycyl lysine isopeptide (Lys-Gly) (interchain with G-Cter in SUMO1); alternate). Lysine 301 is covalently cross-linked (Glycyl lysine isopeptide (Lys-Gly) (interchain with G-Cter in SUMO2); alternate). The residue at position 305 (serine 305) is a Phosphoserine. RRM domains follow at residues 311 to 387 (FNLF…KPKG) and 397 to 470 (RTLL…YTGE). The residue at position 322 (lysine 322) is an N6-acetyllysine. Lysine 328 participates in a covalent cross-link: Glycyl lysine isopeptide (Lys-Gly) (interchain with G-Cter in SUMO1); alternate. Lysine 328 is covalently cross-linked (Glycyl lysine isopeptide (Lys-Gly) (interchain with G-Cter in SUMO2); alternate). Lysine 352 bears the N6-acetyllysine mark. Serine 360 carries the post-translational modification Phosphoserine. At threonine 371 the chain carries Phosphothreonine. Lysine 374 participates in a covalent cross-link: Glycyl lysine isopeptide (Lys-Gly) (interchain with G-Cter in SUMO2). Lysine 381 is covalently cross-linked (Glycyl lysine isopeptide (Lys-Gly) (interchain with G-Cter in SUMO2); alternate). At lysine 381 the chain carries N6-acetyllysine; alternate. Residue lysine 402 is modified to N6-acetyllysine. Serine 405 is subject to Phosphoserine. The residue at position 409 (threonine 409) is a Phosphothreonine. N6-acetyllysine is present on lysine 448. Serine 462 and serine 464 each carry phosphoserine. N6-acetyllysine is present on residues lysine 471 and lysine 480. Positions 489-563 (KTLVLSNLSY…RTIRLELQGP (75 aa)) constitute an RRM 3 domain. Residue lysine 516 forms a Glycyl lysine isopeptide (Lys-Gly) (interchain with G-Cter in SUMO2); alternate linkage. Lysine 516 is modified (N6-acetyllysine; alternate). Lysine 524 is modified (N6-acetyllysine). A Phosphoserine modification is found at serine 566. Lysine 575 carries the post-translational modification N6-acetyllysine. The RRM 4 domain occupies 575–650 (KTLFVKGLSE…NKVTLDWAKP (76 aa)). Lysine 580 participates in a covalent cross-link: Glycyl lysine isopeptide (Lys-Gly) (interchain with G-Cter in SUMO2); alternate. The residue at position 580 (lysine 580) is an N6-acetyllysine; alternate. Serine 583 is subject to Phosphoserine. Lysine 592 participates in a covalent cross-link: Glycyl lysine isopeptide (Lys-Gly) (interchain with G-Cter in SUMO1); alternate. Residue lysine 592 forms a Glycyl lysine isopeptide (Lys-Gly) (interchain with G-Cter in SUMO2); alternate linkage. Phosphoserine occurs at positions 594 and 622. A Glycyl lysine isopeptide (Lys-Gly) (interchain with G-Cter in SUMO2) cross-link involves residue lysine 627. Residues 645-713 (LDWAKPKGEG…KPQGKKTKFE (69 aa)) form a disordered region. N6-acetyllysine is present on lysine 649. Positions 653-702 (EGGFGGRGGGRGGFGGRGGGRGGRGGFGGRGRGGFGGRGGFRGGRGGGGD) are enriched in gly residues. Arginine 659, arginine 663, arginine 669, arginine 673, arginine 676, arginine 682, arginine 684, arginine 690, and arginine 694 each carry asymmetric dimethylarginine. Position 697 is an asymmetric dimethylarginine; alternate (arginine 697). Arginine 697 is subject to Omega-N-methylarginine; alternate.

Identified in a IGF2BP1-dependent mRNP granule complex containing untranslated mRNAs. Component of the SWAP complex that consists of NPM1, NCL/nucleolin, PARP1 and SWAP70. Component of a complex which is at least composed of HTATSF1/Tat-SF1, the P-TEFb complex components CDK9 and CCNT1, RNA polymerase II, SUPT5H, and NCL/nucleolin. Interacts with AICDA. Interacts with APTX. Interacts with C1QBP. Interacts with ERBB4. Interacts (via C-terminus) with FMR1 isoform 6 (via N-terminus). Interacts with GZF1; this interaction is important for nucleolar localization of GZF1. Interacts with NSUN2. Interacts with NVL. Interacts (via N-terminus domain) with SETX. Interacts (via RRM1 and C-terminal RRM4/Arg/Gly-rich domains) with TERT; the interaction is important for nucleolar localization of TERT. Interacts with WDR46. Interacts with ZFP36. Interacts with LRRC34. Interacts with RRP1B. Interacts with HNRNPU; this interaction occurs during mitosis. Interacts with RIOK1; RIOK1 recruits NCL to PRMT5 for symmetrically methylation. Interacts with ZBTB7B. Interacts with MDK; this interaction promotes NCL clustering and lateral movements of this complex into lipid rafts leading to MDK internalization. Interacts with HDGF. Interacts with ALKBH2. Interacts with IGFBP5; this interaction is necessary for IGFBP5 localization to the nucleus. Interacts with DDX24 (when ubiquitinated); this interaction may be important during ribosome biogenesis. In terms of processing, some glutamate residues are glycylated by TTLL8. This modification occurs exclusively on glutamate residues and results in a glycine chain on the gamma-carboxyl group. Symmetrically methylated by PRMT5.

It localises to the nucleus. Its subcellular location is the nucleolus. It is found in the cytoplasm. In terms of biological role, nucleolin is the major nucleolar protein of growing eukaryotic cells. It is found associated with intranucleolar chromatin and pre-ribosomal particles. It induces chromatin decondensation by binding to histone H1. It is thought to play a role in pre-rRNA transcription and ribosome assembly. May play a role in the process of transcriptional elongation. Binds RNA oligonucleotides with 5'-UUAGGG-3' repeats more tightly than the telomeric single-stranded DNA 5'-TTAGGG-3' repeats. In Rattus norvegicus (Rat), this protein is Nucleolin (Ncl).